Consider the following 403-residue polypeptide: Phosphoglycerate kinase (403 aa).

Substrate contacts are provided by residues 21–23, Arg36, 59–62, Arg119, and Arg154; these read DFN and HLGR. Residues Lys207, Gly299, Glu330, and 357–360 each bind ATP; that span reads GGDA.

It belongs to the phosphoglycerate kinase family. Monomer.

The protein localises to the cytoplasm. The enzyme catalyses (2R)-3-phosphoglycerate + ATP = (2R)-3-phospho-glyceroyl phosphate + ADP. The protein operates within carbohydrate degradation; glycolysis; pyruvate from D-glyceraldehyde 3-phosphate: step 2/5. The sequence is that of Phosphoglycerate kinase from Chlamydia trachomatis serovar A (strain ATCC VR-571B / DSM 19440 / HAR-13).